Reading from the N-terminus, the 355-residue chain is MGGKTFMLMAGGTGGHIFPALAVADSLRARGHHVIWLGSKDSMEERIVPQYDILLETLAIKGVRGNGIKRKLMLPFTLYQTVREAQQIIRKHRVECVIGFGGFVTFPGGLAAKLLGVPIVIHEQNAVAGLSNRHLSRWAKRVLYAFPKAFSHEGGLVGNPVRADISNLPVPAERFQGREGRLKILVVGGSLGADVLNKTVPQALALLPDNARPQMYHQSGRGKLGSLQADYDALGVQAECVEFITDMVSAYRDADLVICRAGALTIAELTAAGLGALLVPYPHAVDDHQTANARFMVQAEAGLLLPQTQLTAEKLAEILGGLNREKCLKWAENARTLALPHSADDVAEAAIACAA.

Residues 13–15 (TGG), Asn125, Arg162, Ser190, Ile244, and Gln289 each bind UDP-N-acetyl-alpha-D-glucosamine.

It belongs to the glycosyltransferase 28 family. MurG subfamily.

It is found in the cell inner membrane. The enzyme catalyses di-trans,octa-cis-undecaprenyl diphospho-N-acetyl-alpha-D-muramoyl-L-alanyl-D-glutamyl-meso-2,6-diaminopimeloyl-D-alanyl-D-alanine + UDP-N-acetyl-alpha-D-glucosamine = di-trans,octa-cis-undecaprenyl diphospho-[N-acetyl-alpha-D-glucosaminyl-(1-&gt;4)]-N-acetyl-alpha-D-muramoyl-L-alanyl-D-glutamyl-meso-2,6-diaminopimeloyl-D-alanyl-D-alanine + UDP + H(+). It participates in cell wall biogenesis; peptidoglycan biosynthesis. In terms of biological role, cell wall formation. Catalyzes the transfer of a GlcNAc subunit on undecaprenyl-pyrophosphoryl-MurNAc-pentapeptide (lipid intermediate I) to form undecaprenyl-pyrophosphoryl-MurNAc-(pentapeptide)GlcNAc (lipid intermediate II). The chain is UDP-N-acetylglucosamine--N-acetylmuramyl-(pentapeptide) pyrophosphoryl-undecaprenol N-acetylglucosamine transferase from Neisseria meningitidis serogroup A / serotype 4A (strain DSM 15465 / Z2491).